Here is an 889-residue protein sequence, read N- to C-terminus: Coatomer subunit beta' (889 aa).

WD repeat units lie at residues 11–41 (NRSD…ELWN), 53–83 (VTET…RVFN), 95–125 (AHPD…KLWN), 138–169 (GHEH…KVWS), 182–214 (GQER…KIWD), and 226–256 (GHMS…KIWN). The residue at position 326 (serine 326) is a Phosphoserine. The tract at residues 806–889 (CGAEGLPGSS…AVPEPVEEES (84 aa)) is disordered. Positions 836-864 (DENKEAEVEDSEFKESNSEAVEAEKKEEE) are enriched in basic and acidic residues. Low complexity predominate over residues 866 to 879 (PQQQQSEQQPEQGE).

This sequence belongs to the WD repeat COPB2 family. Oligomeric complex that consists of at least the alpha, beta, beta', gamma, delta, epsilon and zeta subunits. Interacts with the ESCRT-0 subunit VPS27.

The protein localises to the cytoplasm. Its subcellular location is the golgi apparatus membrane. It is found in the cytoplasmic vesicle. The protein resides in the COPI-coated vesicle membrane. Its function is as follows. The coatomer is a cytosolic protein complex that binds to dilysine motifs and reversibly associates with Golgi non-clathrin-coated vesicles, which further mediate biosynthetic protein transport from the ER, via the Golgi up to the trans Golgi network. Coatomer complex is required for budding from Golgi membranes, and is essential for the retrograde Golgi-to-ER transport of dilysine-tagged proteins. This Saccharomyces cerevisiae (strain ATCC 204508 / S288c) (Baker's yeast) protein is Coatomer subunit beta' (SEC27).